A 229-amino-acid chain; its full sequence is 7-cyano-7-deazaguanine synthase (229 aa).

ATP is bound at residue 12 to 22; sequence LSGGMDSCVCA. Positions 194, 202, 205, and 208 each coordinate Zn(2+).

This sequence belongs to the QueC family. Zn(2+) serves as cofactor.

It carries out the reaction 7-carboxy-7-deazaguanine + NH4(+) + ATP = 7-cyano-7-deazaguanine + ADP + phosphate + H2O + H(+). The protein operates within purine metabolism; 7-cyano-7-deazaguanine biosynthesis. In terms of biological role, catalyzes the ATP-dependent conversion of 7-carboxy-7-deazaguanine (CDG) to 7-cyano-7-deazaguanine (preQ(0)). The protein is 7-cyano-7-deazaguanine synthase of Acidobacterium capsulatum (strain ATCC 51196 / DSM 11244 / BCRC 80197 / JCM 7670 / NBRC 15755 / NCIMB 13165 / 161).